An 85-amino-acid polypeptide reads, in one-letter code: Elongation factor 1-beta (85 aa).

This sequence belongs to the EF-1-beta/EF-1-delta family.

Functionally, promotes the exchange of GDP for GTP in EF-1-alpha/GDP, thus allowing the regeneration of EF-1-alpha/GTP that could then be used to form the ternary complex EF-1-alpha/GTP/AAtRNA. This chain is Elongation factor 1-beta, found in Methanoregula boonei (strain DSM 21154 / JCM 14090 / 6A8).